A 198-amino-acid polypeptide reads, in one-letter code: 3-isopropylmalate dehydratase small subunit (198 aa).

This sequence belongs to the LeuD family. LeuD type 1 subfamily. As to quaternary structure, heterodimer of LeuC and LeuD.

The catalysed reaction is (2R,3S)-3-isopropylmalate = (2S)-2-isopropylmalate. Its pathway is amino-acid biosynthesis; L-leucine biosynthesis; L-leucine from 3-methyl-2-oxobutanoate: step 2/4. Catalyzes the isomerization between 2-isopropylmalate and 3-isopropylmalate, via the formation of 2-isopropylmaleate. In Mycobacterium avium (strain 104), this protein is 3-isopropylmalate dehydratase small subunit.